Reading from the N-terminus, the 504-residue chain is Apoptosis inhibitor 5 (504 aa).

Residues 1-360 form an ARM-like and Heat-like helical repeats region; the sequence is MPTVEELYRN…HQLGRKLPDF (360 aa). K251 is subject to N6-acetyllysine. A leucine-zipper region spans residues 370-391; the sequence is LKDFKIRLQYFARGLQVYIRQL. Residue T399 is modified to Phosphothreonine. The interval 452–504 is disordered; the sequence is GQKRASEDTTSGSPPKKSSAGPKRDARQIYNPPSGKYSSNLGNFNYERSLQGK. Positions 454–475 match the Nuclear localization signal motif; sequence KRASEDTTSGSPPKKSSAGPKR. Phosphoserine is present on residues S462, S464, and S469. Positions 462–472 are enriched in low complexity; the sequence is SGSPPKKSSAG. Residues 487 to 504 are compositionally biased toward polar residues; sequence KYSSNLGNFNYERSLQGK.

It belongs to the API5 family. In terms of assembly, monomer. Interacts with FGF2 and ACIN1. Post-translationally, acetylation at Lys-251 impairs antiapoptotic function.

The protein resides in the nucleus. Its subcellular location is the cytoplasm. In terms of biological role, antiapoptotic factor that may have a role in protein assembly. Negatively regulates ACIN1. By binding to ACIN1, it suppresses ACIN1 cleavage from CASP3 and ACIN1-mediated DNA fragmentation. Also known to efficiently suppress E2F1-induced apoptosis. The chain is Apoptosis inhibitor 5 (API5) from Pongo abelii (Sumatran orangutan).